A 128-amino-acid chain; its full sequence is Sulfurtransferase TusD (128 aa).

Cys-78 functions as the Cysteine persulfide intermediate in the catalytic mechanism.

This sequence belongs to the DsrE/TusD family. As to quaternary structure, heterohexamer, formed by a dimer of trimers. The hexameric TusBCD complex contains 2 copies each of TusB, TusC and TusD. The TusBCD complex interacts with TusE.

The protein localises to the cytoplasm. In terms of biological role, part of a sulfur-relay system required for 2-thiolation of 5-methylaminomethyl-2-thiouridine (mnm(5)s(2)U) at tRNA wobble positions. Accepts sulfur from TusA and transfers it in turn to TusE. This chain is Sulfurtransferase TusD, found in Salmonella agona (strain SL483).